A 226-amino-acid chain; its full sequence is Neuron-specific vesicular protein calcyon (226 aa).

The interval 1–21 is disordered; the sequence is MVKLGCSFSGKPGKEAGDQDG. At 1 to 88 the chain is on the extracellular side; that stretch reads MVKLGCSFSG…EEGRRLPTAR (88 aa). Residues 89–109 form a helical membrane-spanning segment; sequence MIAFAMALLGCVLIMYKAIWY. Over 110–226 the chain is Cytoplasmic; the sequence is DQFTCPDGFL…AEGVPSQPPK (117 aa). Positions 177 to 226 are disordered; it reads HKGTTPAAMAVSTAAAAAAAEGTEPSGKSLDTREKEDPQKAEGVPSQPPK. Low complexity predominate over residues 183-196; the sequence is AAMAVSTAAAAAAA. The span at 206–216 shows a compositional bias: basic and acidic residues; it reads LDTREKEDPQK.

This sequence belongs to the NSG family. In terms of assembly, interacts with CLTA. In terms of tissue distribution, most abundant in brain. Also expressed in testis and ovary and, at much lower levels, in kidney and heart.

The protein localises to the cytoplasmic vesicle membrane. It is found in the cell membrane. Functionally, interacts with clathrin light chain A and stimulates clathrin self-assembly and clathrin-mediated endocytosis. This chain is Neuron-specific vesicular protein calcyon (Caly), found in Mus musculus (Mouse).